Reading from the N-terminus, the 351-residue chain is Peptide chain release factor 1 (351 aa).

N5-methylglutamine is present on Gln-229.

The protein belongs to the prokaryotic/mitochondrial release factor family. Post-translationally, methylated by PrmC. Methylation increases the termination efficiency of RF1.

It localises to the cytoplasm. Its function is as follows. Peptide chain release factor 1 directs the termination of translation in response to the peptide chain termination codons UAG and UAA. The chain is Peptide chain release factor 1 from Cereibacter sphaeroides (strain ATCC 17025 / ATH 2.4.3) (Rhodobacter sphaeroides).